The sequence spans 140 residues: Large ribosomal subunit protein uL14 (140 aa).

It belongs to the universal ribosomal protein uL14 family. In terms of assembly, part of the 50S ribosomal subunit. Forms a cluster with proteins L3 and L24e, part of which may contact the 16S rRNA in 2 intersubunit bridges.

In terms of biological role, binds to 23S rRNA. Forms part of two intersubunit bridges in the 70S ribosome. This Aeropyrum pernix (strain ATCC 700893 / DSM 11879 / JCM 9820 / NBRC 100138 / K1) protein is Large ribosomal subunit protein uL14.